The sequence spans 286 residues: Phosphatidylserine decarboxylase proenzyme (286 aa).

Residues Asp-91, His-148, and Ser-251 each act as charge relay system; for autoendoproteolytic cleavage activity in the active site. Catalysis depends on Ser-251, which acts as the Schiff-base intermediate with substrate; via pyruvic acid; for decarboxylase activity. At Ser-251 the chain carries Pyruvic acid (Ser); by autocatalysis.

This sequence belongs to the phosphatidylserine decarboxylase family. PSD-B subfamily. Prokaryotic type I sub-subfamily. In terms of assembly, heterodimer of a large membrane-associated beta subunit and a small pyruvoyl-containing alpha subunit. Pyruvate is required as a cofactor. In terms of processing, is synthesized initially as an inactive proenzyme. Formation of the active enzyme involves a self-maturation process in which the active site pyruvoyl group is generated from an internal serine residue via an autocatalytic post-translational modification. Two non-identical subunits are generated from the proenzyme in this reaction, and the pyruvate is formed at the N-terminus of the alpha chain, which is derived from the carboxyl end of the proenzyme. The autoendoproteolytic cleavage occurs by a canonical serine protease mechanism, in which the side chain hydroxyl group of the serine supplies its oxygen atom to form the C-terminus of the beta chain, while the remainder of the serine residue undergoes an oxidative deamination to produce ammonia and the pyruvoyl prosthetic group on the alpha chain. During this reaction, the Ser that is part of the protease active site of the proenzyme becomes the pyruvoyl prosthetic group, which constitutes an essential element of the active site of the mature decarboxylase.

It localises to the cell membrane. It catalyses the reaction a 1,2-diacyl-sn-glycero-3-phospho-L-serine + H(+) = a 1,2-diacyl-sn-glycero-3-phosphoethanolamine + CO2. It participates in phospholipid metabolism; phosphatidylethanolamine biosynthesis; phosphatidylethanolamine from CDP-diacylglycerol: step 2/2. In terms of biological role, catalyzes the formation of phosphatidylethanolamine (PtdEtn) from phosphatidylserine (PtdSer). This chain is Phosphatidylserine decarboxylase proenzyme, found in Marinobacter nauticus (strain ATCC 700491 / DSM 11845 / VT8) (Marinobacter aquaeolei).